Consider the following 449-residue polypeptide: UDP-N-acetylmuramoylalanine--D-glutamate ligase (449 aa).

118–124 contributes to the ATP binding site; the sequence is GSNGKTT.

This sequence belongs to the MurCDEF family.

The protein localises to the cytoplasm. The catalysed reaction is UDP-N-acetyl-alpha-D-muramoyl-L-alanine + D-glutamate + ATP = UDP-N-acetyl-alpha-D-muramoyl-L-alanyl-D-glutamate + ADP + phosphate + H(+). It functions in the pathway cell wall biogenesis; peptidoglycan biosynthesis. Its function is as follows. Cell wall formation. Catalyzes the addition of glutamate to the nucleotide precursor UDP-N-acetylmuramoyl-L-alanine (UMA). The sequence is that of UDP-N-acetylmuramoylalanine--D-glutamate ligase from Leuconostoc citreum (strain KM20).